The primary structure comprises 94 residues: Small ribosomal subunit protein uS19 (94 aa).

The disordered stretch occupies residues 75–94 (SHTRTFKGHAGDKKAAGSKR). A compositionally biased stretch (basic and acidic residues) spans 83–94 (HAGDKKAAGSKR).

This sequence belongs to the universal ribosomal protein uS19 family.

Functionally, protein S19 forms a complex with S13 that binds strongly to the 16S ribosomal RNA. This is Small ribosomal subunit protein uS19 from Nitrosomonas europaea (strain ATCC 19718 / CIP 103999 / KCTC 2705 / NBRC 14298).